We begin with the raw amino-acid sequence, 213 residues long: Small ribosomal subunit protein eS1 (213 aa).

It belongs to the eukaryotic ribosomal protein eS1 family.

The polypeptide is Small ribosomal subunit protein eS1 (Desulfurococcus amylolyticus (strain DSM 18924 / JCM 16383 / VKM B-2413 / 1221n) (Desulfurococcus kamchatkensis)).